The primary structure comprises 118 residues: MARIAGVNLAIQKHVWIGLQSIYGIGRTRSRKVCDAANVAIYTKIRDLSEPEIERLRVEVGKYVIEGDLRREVGMAIKRLMDLNCYRGLRHRRCLPLRGQRTRTNARTRKGPRKAIKK.

Positions 99–118 (GQRTRTNARTRKGPRKAIKK) are disordered.

The protein belongs to the universal ribosomal protein uS13 family. In terms of assembly, part of the 30S ribosomal subunit. Forms a loose heterodimer with protein S19. Forms two bridges to the 50S subunit in the 70S ribosome.

Functionally, located at the top of the head of the 30S subunit, it contacts several helices of the 16S rRNA. In the 70S ribosome it contacts the 23S rRNA (bridge B1a) and protein L5 of the 50S subunit (bridge B1b), connecting the 2 subunits; these bridges are implicated in subunit movement. Contacts the tRNAs in the A and P-sites. This is Small ribosomal subunit protein uS13 from Xylella fastidiosa (strain M12).